A 290-amino-acid chain; its full sequence is Protein-glutamine deamidase Cif (290 aa).

Positions methionine 1 to arginine 26 are disordered. Residues cysteine 117, histidine 173, and glutamine 193 contribute to the active site.

This sequence belongs to the Cif family.

Its subcellular location is the secreted. The protein localises to the host nucleus. It catalyses the reaction L-glutaminyl-[protein] + H2O = L-glutamyl-[protein] + NH4(+). In terms of biological role, protein-glutamine deamidase effector that inhibits the host cell cycle and other key cellular processes such as the actin network and programmed-cell death. Acts by mediating the side chain deamidation of 'Gln-40' of host NEDD8, converting it to glutamate, thereby abolishing the activity of cullin-RING-based E3 ubiquitin-protein ligase complexes (CRL complexes). Inactivation of CRL complexes prevents ubiquitination and subsequent degradation of the cyclin-dependent kinase inhibitors CDKN1A/p21 and CDKN1B/p27, leading to G1 and G2 cell cycle arrests in host cells. Also able to catalyze deamidation of 'Gln-40' of host ubiquitin in vitro; however, NEDD8 constitutes the preferred substrate in vivo. The protein is Protein-glutamine deamidase Cif of Yersinia pseudotuberculosis serotype O:3 (strain YPIII).